The chain runs to 658 residues: UvrABC system protein B (658 aa).

The Helicase ATP-binding domain maps to 26 to 414 (AGLKKGLKHQ…PDVIEQIIRP (389 aa)). 39–46 (GATGTGKT) is an ATP binding site. Residues 92–115 (YYDYYQPEAYVPQSDTYIEKDASI) carry the Beta-hairpin motif. The 163-residue stretch at 430–592 (QIDDLMDEIN…ITPKTIKKEI (163 aa)) folds into the Helicase C-terminal domain. Positions 622-658 (DVFIEGMEHEMKEAAKALDFERAAELRDALLEIKAEG) constitute a UVR domain.

Belongs to the UvrB family. Forms a heterotetramer with UvrA during the search for lesions. Interacts with UvrC in an incision complex.

The protein resides in the cytoplasm. The UvrABC repair system catalyzes the recognition and processing of DNA lesions. A damage recognition complex composed of 2 UvrA and 2 UvrB subunits scans DNA for abnormalities. Upon binding of the UvrA(2)B(2) complex to a putative damaged site, the DNA wraps around one UvrB monomer. DNA wrap is dependent on ATP binding by UvrB and probably causes local melting of the DNA helix, facilitating insertion of UvrB beta-hairpin between the DNA strands. Then UvrB probes one DNA strand for the presence of a lesion. If a lesion is found the UvrA subunits dissociate and the UvrB-DNA preincision complex is formed. This complex is subsequently bound by UvrC and the second UvrB is released. If no lesion is found, the DNA wraps around the other UvrB subunit that will check the other stand for damage. This chain is UvrABC system protein B, found in Listeria monocytogenes serovar 1/2a (strain ATCC BAA-679 / EGD-e).